A 248-amino-acid polypeptide reads, in one-letter code: 2-C-methyl-D-erythritol 4-phosphate cytidylyltransferase (248 aa).

The protein belongs to the IspD/TarI cytidylyltransferase family. IspD subfamily.

It carries out the reaction 2-C-methyl-D-erythritol 4-phosphate + CTP + H(+) = 4-CDP-2-C-methyl-D-erythritol + diphosphate. It participates in isoprenoid biosynthesis; isopentenyl diphosphate biosynthesis via DXP pathway; isopentenyl diphosphate from 1-deoxy-D-xylulose 5-phosphate: step 2/6. Its function is as follows. Catalyzes the formation of 4-diphosphocytidyl-2-C-methyl-D-erythritol from CTP and 2-C-methyl-D-erythritol 4-phosphate (MEP). This Corynebacterium efficiens (strain DSM 44549 / YS-314 / AJ 12310 / JCM 11189 / NBRC 100395) protein is 2-C-methyl-D-erythritol 4-phosphate cytidylyltransferase.